The chain runs to 926 residues: DNA mismatch repair protein MutS (926 aa).

The disordered stretch occupies residues 16–40 (VASTPTRRGRPPGSSAARASNGAGS). Positions 26–40 (PPGSSAARASNGAGS) are enriched in low complexity. 658 to 665 (GPNMAGKS) is a binding site for ATP.

This sequence belongs to the DNA mismatch repair MutS family.

Functionally, this protein is involved in the repair of mismatches in DNA. It is possible that it carries out the mismatch recognition step. This protein has a weak ATPase activity. The protein is DNA mismatch repair protein MutS of Granulibacter bethesdensis (strain ATCC BAA-1260 / CGDNIH1).